The primary structure comprises 257 residues: Phosphonates import ATP-binding protein PhnC (257 aa).

The 245-residue stretch at 2 to 246 (IEFRNVSKVY…KFAEIYGDVA (245 aa)) folds into the ABC transporter domain. 35 to 42 (GLSGAGKS) is a binding site for ATP.

The protein belongs to the ABC transporter superfamily. Phosphonates importer (TC 3.A.1.9.1) family. As to quaternary structure, the complex is composed of two ATP-binding proteins (PhnC), two transmembrane proteins (PhnE) and a solute-binding protein (PhnD).

The protein localises to the cell membrane. The enzyme catalyses phosphonate(out) + ATP + H2O = phosphonate(in) + ADP + phosphate + H(+). Part of the ABC transporter complex PhnCDE involved in phosphonates import. Responsible for energy coupling to the transport system. The polypeptide is Phosphonates import ATP-binding protein PhnC (Bacillus cereus (strain ATCC 10987 / NRS 248)).